The following is a 194-amino-acid chain: Phosphoheptose isomerase (194 aa).

Positions 37-194 (ISNSFKQGGK…LIEFEMAKQA (158 aa)) constitute an SIS domain. 52–54 (NGG) lines the substrate pocket. Positions 61 and 65 each coordinate Zn(2+). Substrate contacts are provided by residues Glu-65, 93–94 (ND), 119–121 (STS), Ser-124, and Gln-172. Zn(2+)-binding residues include Gln-172 and His-180.

It belongs to the SIS family. GmhA subfamily. In terms of assembly, homotetramer. Zn(2+) is required as a cofactor.

The protein resides in the cytoplasm. The catalysed reaction is 2 D-sedoheptulose 7-phosphate = D-glycero-alpha-D-manno-heptose 7-phosphate + D-glycero-beta-D-manno-heptose 7-phosphate. The protein operates within carbohydrate biosynthesis; D-glycero-D-manno-heptose 7-phosphate biosynthesis; D-glycero-alpha-D-manno-heptose 7-phosphate and D-glycero-beta-D-manno-heptose 7-phosphate from sedoheptulose 7-phosphate: step 1/1. In terms of biological role, catalyzes the isomerization of sedoheptulose 7-phosphate in D-glycero-D-manno-heptose 7-phosphate. The protein is Phosphoheptose isomerase of Haemophilus influenzae (strain PittGG).